Reading from the N-terminus, the 935-residue chain is Isoleucine--tRNA ligase (935 aa).

A 'HIGH' region motif is present at residues 58-68 (PYANGSIHVGH). Residue glutamate 558 coordinates L-isoleucyl-5'-AMP. The 'KMSKS' region motif lies at 599-603 (KMSKS). Lysine 602 contacts ATP. Zn(2+) contacts are provided by cysteine 897, cysteine 900, cysteine 917, and cysteine 920.

It belongs to the class-I aminoacyl-tRNA synthetase family. IleS type 1 subfamily. As to quaternary structure, monomer. Requires Zn(2+) as cofactor.

It localises to the cytoplasm. It carries out the reaction tRNA(Ile) + L-isoleucine + ATP = L-isoleucyl-tRNA(Ile) + AMP + diphosphate. Its function is as follows. Catalyzes the attachment of isoleucine to tRNA(Ile). As IleRS can inadvertently accommodate and process structurally similar amino acids such as valine, to avoid such errors it has two additional distinct tRNA(Ile)-dependent editing activities. One activity is designated as 'pretransfer' editing and involves the hydrolysis of activated Val-AMP. The other activity is designated 'posttransfer' editing and involves deacylation of mischarged Val-tRNA(Ile). The chain is Isoleucine--tRNA ligase from Francisella tularensis subsp. mediasiatica (strain FSC147).